Here is a 467-residue protein sequence, read N- to C-terminus: Uronate isomerase (467 aa).

This sequence belongs to the metallo-dependent hydrolases superfamily. Uronate isomerase family.

The catalysed reaction is D-glucuronate = D-fructuronate. The enzyme catalyses aldehydo-D-galacturonate = keto-D-tagaturonate. Its pathway is carbohydrate metabolism; pentose and glucuronate interconversion. The sequence is that of Uronate isomerase from Haemophilus influenzae (strain 86-028NP).